Consider the following 446-residue polypeptide: Mycosin-1 (446 aa).

The N-terminal stretch at 1–21 is a signal peptide; that stretch reads MHRIFLITVALALLTASPASA. Residues 24-43 form a disordered region; it reads PPPIDPGALPPDVTGPDQPT. The 324-residue stretch at 64-387 folds into the Peptidase S8 domain; that stretch reads PWSNTYLGVA…AGVIDAVAAL (324 aa). Catalysis depends on charge relay system residues aspartate 90, histidine 121, and serine 332. A helical transmembrane segment spans residues 419–439; it reads ITAVALVAVGLTLALGLGALA.

Belongs to the peptidase S8 family.

Its subcellular location is the cell membrane. Its function is as follows. May play a dual role in regulation of ESX-1 secretion and virulence. Acts as a protease that cleaves EspB. Essential for ESX-1 function, required for early replication in macrophages and full virulence in mice. The protein is Mycosin-1 of Mycobacterium tuberculosis (strain ATCC 25618 / H37Rv).